Here is a 200-residue protein sequence, read N- to C-terminus: MFKGNVQGVGTVENIDKGAKFQSLHGVSLLPIDADLQSHDIIFPEDILEGVTSGELIAINGVRLTVVHTDKSIVRFDINDALELTTLGQLKVGDKVNIEKSFKFGDMTGGRSLSGIVTGVADIVEFIEKENNRQIWIEAPEHLTEFLVEKKYIGVDGVYLVIDAIENNRFCINLLLETDMRWYKKGSKVNIEIPDIAGNW.

2 Lumazine-binding repeats span residues 1-111 (MFKG…TGGR) and 112-200 (SLSG…AGNW).

In terms of assembly, monomer.

The protein localises to the cytoplasm. In terms of biological role, blue fluorescence protein (BFP) that can bind 6,7-dimethyl-8-ribityllumazine, riboflavin, and 6-methyl-7-oxo-8-ribityllumazine as a bound fluorophore. Has no riboflavin-synthase activity. This Aliivibrio fischeri (Vibrio fischeri) protein is Blue fluorescence protein.